Reading from the N-terminus, the 1050-residue chain is Ankyrin repeat domain-containing protein 27 (1050 aa).

Residues 1-372 (MALYDEDLLK…RQGSLSAKPP (372 aa)) are sufficient for GEF activity towards RAB21. The VPS9 domain maps to 233-371 (ASEDAAFNKI…IRQGSLSAKP (139 aa)). ANK repeat units follow at residues 396–426 (SPTD…DKDT), 462–491 (RGHT…MVNA), 495–524 (HGAT…SAEV), 528–560 (NGNT…RLDI), 564–593 (KGDT…STEI), and 597–627 (LKET…RQKS). Positions 396 to 460 (SPTDCLFKHI…PSVVTPFSRD (65 aa)) are sufficient for interaction with VPS29. The interaction with RAB38 stretch occupies residues 451-600 (PSVVTPFSRD…TEIQNRLKET (150 aa)). The interval 451–730 (PSVVTPFSRD…APAQKRLAKV (280 aa)) is interaction with RAB32. The tract at residues 625-665 (QKSSEAPVQSPQRSVDSISQESSTSSFSSMSASSRQEETKK) is disordered. The segment covering 628–637 (SEAPVQSPQR) has biased composition (polar residues). Positions 638–658 (SVDSISQESSTSSFSSMSASS) are enriched in low complexity. The required for interaction with VAMP7 stretch occupies residues 658–707 (SRQEETKKDYREVEKLLRAVADGDLEMVRYLLEWTEEDLEDAEDTVSAAD). ANK repeat units lie at residues 668–698 (REVE…DLED), 743–772 (DGSS…NAGA), 776–805 (DQAV…KPNK), 809–838 (SGNT…SINA), and 842–871 (KGNT…SVQV). Positions 692-746 (TEEDLEDAEDTVSAADPEFCHPLCQCPKCAPAQKRLAKVPASGLGVNVTSQDGSS) are sufficient for interaction with VPS29. A phosphoserine mark is found at Ser-962 and Ser-970. A disordered region spans residues 987–1050 (PAQSGSHAAE…TPQEVSASRS (64 aa)). Over residues 994–1004 (AAEKGNSDWPE) the composition is skewed to basic and acidic residues. At Thr-1023 the chain carries Phosphothreonine. Polar residues predominate over residues 1040 to 1050 (STPQEVSASRS).

As to quaternary structure, interacts with RAB21 (GDP-bound form), VPS29, RAB32 (GTP-bound form), RAB38 (GTP-bound form), VAMP7, KIF5A, KIF5C, GOLGA4. Interacts with low affinity with RAB5. ANKRD27:RAB32 heterodimers can homodimerize to form tetramers. Can interact with RAB38 or RAB32, VPS29 and VAMP7 simultaneously. A decreased interaction with RAB32 seen in the presence of SGSM2.

The protein localises to the early endosome. Its subcellular location is the late endosome. The protein resides in the cytoplasmic vesicle membrane. It localises to the lysosome. It is found in the cell membrane. The protein localises to the melanosome. May be a guanine exchange factor (GEF) for Rab21, Rab32 and Rab38 and regulate endosome dynamics. May regulate the participation of VAMP7 in membrane fusion events; in vitro inhibits VAMP7-mediated SNARE complex formation by trapping VAMP7 in a closed, fusogenically inactive conformation. Involved in peripheral melanosomal distribution of TYRP1 in melanocytes; the function, which probably is implicating vesicle-trafficking, includes cooperation with Rab32, Rab38 and VAMP7. Involved in the regulation of neurite growth; the function seems to require its GEF activity, probably towards Rab21, and VAMP7 but not Rab32/38. Proposed to be involved in Golgi sorting of VAMP7 and transport of VAMP7 vesicles to the cell surface; the function seems to implicate kinesin heavy chain isoform 5 proteins, GOLGA4, RAB21 and MACF1. Required for the colocalization of VAMP7 and Rab21, probably on TGN sites. Involved in GLUT1 endosome-to-plasma membrane trafficking; the function is dependent of association with VPS29. Regulates the proper trafficking of melanogenic enzymes TYR, TYRP1 and DCT/TYRP2 to melanosomes in melanocytes. This chain is Ankyrin repeat domain-containing protein 27 (ANKRD27), found in Homo sapiens (Human).